Reading from the N-terminus, the 99-residue chain is A-type ATP synthase subunit F (99 aa).

It belongs to the V-ATPase F subunit family. Has multiple subunits with at least A(3), B(3), C, D, E, F, H, I and proteolipid K(x).

The protein resides in the cell membrane. Functionally, component of the A-type ATP synthase that produces ATP from ADP in the presence of a proton gradient across the membrane. This is A-type ATP synthase subunit F from Methanothrix thermoacetophila (strain DSM 6194 / JCM 14653 / NBRC 101360 / PT) (Methanosaeta thermophila).